A 163-amino-acid chain; its full sequence is IQ domain-containing protein F2 (163 aa).

2 consecutive IQ domains span residues 42–71 (RVIA…STWI) and 98–127 (RERA…AIYV).

The protein is IQ domain-containing protein F2 (IQCF2) of Bos taurus (Bovine).